The chain runs to 432 residues: Adenylosuccinate synthetase (432 aa).

Residues 16–22 and 44–46 contribute to the GTP site; these read GDEGKGK and GHM. The active-site Proton acceptor is the D17. 2 residues coordinate Mg(2+): D17 and G44. IMP is bound by residues 17-20, 42-45, T132, R146, Q226, T241, and R305; these read DEGK and NAGH. Catalysis depends on H45, which acts as the Proton donor. 301-307 contributes to the substrate binding site; that stretch reads LNTGRPR. GTP contacts are provided by residues R307, 333–335, and 415–417; these read LFD and SVG.

The protein belongs to the adenylosuccinate synthetase family. In terms of assembly, homodimer. The cofactor is Mg(2+).

It localises to the cytoplasm. The catalysed reaction is IMP + L-aspartate + GTP = N(6)-(1,2-dicarboxyethyl)-AMP + GDP + phosphate + 2 H(+). The protein operates within purine metabolism; AMP biosynthesis via de novo pathway; AMP from IMP: step 1/2. Functionally, plays an important role in the de novo pathway of purine nucleotide biosynthesis. Catalyzes the first committed step in the biosynthesis of AMP from IMP. The protein is Adenylosuccinate synthetase of Mycoplasma mycoides subsp. mycoides SC (strain CCUG 32753 / NCTC 10114 / PG1).